We begin with the raw amino-acid sequence, 351 residues long: SH3 domain-containing protein 3 (351 aa).

2 coiled-coil regions span residues 1 to 21 (MDAF…QQLA) and 193 to 213 (LQLA…LGKE). In terms of domain architecture, BAR spans 31 to 267 (YESSDVMVID…MVTEKQHKES (237 aa)). One can recognise an SH3 domain in the interval 281-340 (TSYFLAEVIHPFSAASEKELDLDKGDYIVVRKVSQTGWAEGECKGKAGWFPMAYIEKRQR).

As to quaternary structure, interacts with FREE1. Interacts (via SH3 domain) with DRP2A/ADL6. Binds to SH3P2. As to expression, detected in all tissues except seedlings.

Its subcellular location is the cytoplasmic vesicle. The protein localises to the clathrin-coated vesicle. May be involved in the recruitment of DRP2A to the accessory protein complex and in the negative regulation of its GTPase activity. The protein is SH3 domain-containing protein 3 of Arabidopsis thaliana (Mouse-ear cress).